A 91-amino-acid polypeptide reads, in one-letter code: Putative defensin-like protein 145 (91 aa).

The signal sequence occupies residues 1-26 (MNKNIIFSFTVLTLFVIFVQVTGVIG). N-linked (GlcNAc...) asparagine glycosylation is found at Asn-35 and Asn-68. 4 disulfide bridges follow: Cys-39/Cys-84, Cys-52/Cys-74, Cys-57/Cys-78, and Cys-61/Cys-80.

Belongs to the DEFL family.

The protein resides in the secreted. This is Putative defensin-like protein 145 (LCR2) from Arabidopsis thaliana (Mouse-ear cress).